The following is a 426-amino-acid chain: Enolase (426 aa).

(2R)-2-phosphoglycerate is bound at residue Gln163. Residue Glu205 is the Proton donor of the active site. Asp242, Glu283, and Asp310 together coordinate Mg(2+). (2R)-2-phosphoglycerate is bound by residues Lys335, Arg364, Ser365, and Lys386. Lys335 (proton acceptor) is an active-site residue.

It belongs to the enolase family. It depends on Mg(2+) as a cofactor.

The protein resides in the cytoplasm. It localises to the secreted. The protein localises to the cell surface. The enzyme catalyses (2R)-2-phosphoglycerate = phosphoenolpyruvate + H2O. It functions in the pathway carbohydrate degradation; glycolysis; pyruvate from D-glyceraldehyde 3-phosphate: step 4/5. Its function is as follows. Catalyzes the reversible conversion of 2-phosphoglycerate (2-PG) into phosphoenolpyruvate (PEP). It is essential for the degradation of carbohydrates via glycolysis. This Aquifex aeolicus (strain VF5) protein is Enolase.